The primary structure comprises 206 residues: Protein-methionine-sulfoxide reductase heme-binding subunit MsrQ (206 aa).

4 helical membrane passes run 8–28 (IVWLKVLLHLAGLLPFLWLVW), 82–102 (LWCFAWATLHLTSYALLELGI), 116–136 (PYLTLGIISWFILFALTLTST), and 153–173 (FVYLVAILAPIHYLWSVKILS).

This sequence belongs to the MsrQ family. In terms of assembly, heterodimer of a catalytic subunit (MsrP) and a heme-binding subunit (MsrQ). The cofactor is FMN. Heme b is required as a cofactor.

The protein localises to the cell inner membrane. Its function is as follows. Part of the MsrPQ system that repairs oxidized periplasmic proteins containing methionine sulfoxide residues (Met-O), using respiratory chain electrons. Thus protects these proteins from oxidative-stress damage caused by reactive species of oxygen and chlorine generated by the host defense mechanisms. MsrPQ is essential for the maintenance of envelope integrity under bleach stress, rescuing a wide series of structurally unrelated periplasmic proteins from methionine oxidation. MsrQ provides electrons for reduction to the reductase catalytic subunit MsrP, using the quinone pool of the respiratory chain. This Citrobacter koseri (strain ATCC BAA-895 / CDC 4225-83 / SGSC4696) protein is Protein-methionine-sulfoxide reductase heme-binding subunit MsrQ.